We begin with the raw amino-acid sequence, 91 residues long: Gene 76 protein (91 aa).

Residues 58–81 (ELPSCDESPKGEARRDNDNRDGGK) form a disordered region.

In Mycobacterium phage L5 (Mycobacteriophage L5), this protein is Gene 76 protein (76).